The sequence spans 396 residues: Tryptophan synthase beta chain (396 aa).

An N6-(pyridoxal phosphate)lysine modification is found at Lys86.

This sequence belongs to the TrpB family. In terms of assembly, tetramer of two alpha and two beta chains. Pyridoxal 5'-phosphate serves as cofactor.

The enzyme catalyses (1S,2R)-1-C-(indol-3-yl)glycerol 3-phosphate + L-serine = D-glyceraldehyde 3-phosphate + L-tryptophan + H2O. Its pathway is amino-acid biosynthesis; L-tryptophan biosynthesis; L-tryptophan from chorismate: step 5/5. The beta subunit is responsible for the synthesis of L-tryptophan from indole and L-serine. This is Tryptophan synthase beta chain from Serratia proteamaculans (strain 568).